The following is a 492-amino-acid chain: 3-octaprenyl-4-hydroxybenzoate carboxy-lyase (492 aa).

Asparagine 175 lines the Mn(2+) pocket. Residues 178 to 180, 192 to 194, and 197 to 198 each bind prenylated FMN; these read IYR, RWL, and RG. Glutamate 241 is a Mn(2+) binding site. The active-site Proton donor is aspartate 290.

Belongs to the UbiD family. In terms of assembly, homohexamer. Prenylated FMN serves as cofactor. Mn(2+) is required as a cofactor.

It localises to the cell membrane. It carries out the reaction a 4-hydroxy-3-(all-trans-polyprenyl)benzoate + H(+) = a 2-(all-trans-polyprenyl)phenol + CO2. The protein operates within cofactor biosynthesis; ubiquinone biosynthesis. In terms of biological role, catalyzes the decarboxylation of 3-octaprenyl-4-hydroxy benzoate to 2-octaprenylphenol, an intermediate step in ubiquinone biosynthesis. The chain is 3-octaprenyl-4-hydroxybenzoate carboxy-lyase from Salmonella typhimurium (strain LT2 / SGSC1412 / ATCC 700720).